The sequence spans 295 residues: Phosphoenolpyruvate phosphomutase (295 aa).

Asp-58 serves as the catalytic Nucleophile. Mg(2+) is bound at residue Asp-58.

This sequence belongs to the isocitrate lyase/PEP mutase superfamily. PEP mutase family. In terms of assembly, homotetramer. The cofactor is Mg(2+).

It catalyses the reaction phosphoenolpyruvate + H(+) = 3-phosphonopyruvate. The protein operates within phosphorus metabolism; phosphonate biosynthesis. In terms of biological role, formation of a carbon-phosphorus bond by converting phosphoenolpyruvate (PEP) to phosphonopyruvate (P-Pyr). The protein is Phosphoenolpyruvate phosphomutase of Mytilus edulis (Blue mussel).